The chain runs to 488 residues: Protein nucleotidyltransferase YdiU (488 aa).

ATP-binding residues include glycine 91, glycine 93, arginine 94, lysine 114, aspartate 126, glycine 127, arginine 177, and arginine 184. Aspartate 253 acts as the Proton acceptor in catalysis. Positions 254 and 263 each coordinate Mg(2+). Residue aspartate 263 participates in ATP binding.

Belongs to the SELO family. Mg(2+) serves as cofactor. Requires Mn(2+) as cofactor.

The catalysed reaction is L-seryl-[protein] + ATP = 3-O-(5'-adenylyl)-L-seryl-[protein] + diphosphate. It carries out the reaction L-threonyl-[protein] + ATP = 3-O-(5'-adenylyl)-L-threonyl-[protein] + diphosphate. The enzyme catalyses L-tyrosyl-[protein] + ATP = O-(5'-adenylyl)-L-tyrosyl-[protein] + diphosphate. It catalyses the reaction L-histidyl-[protein] + UTP = N(tele)-(5'-uridylyl)-L-histidyl-[protein] + diphosphate. The catalysed reaction is L-seryl-[protein] + UTP = O-(5'-uridylyl)-L-seryl-[protein] + diphosphate. It carries out the reaction L-tyrosyl-[protein] + UTP = O-(5'-uridylyl)-L-tyrosyl-[protein] + diphosphate. Its function is as follows. Nucleotidyltransferase involved in the post-translational modification of proteins. It can catalyze the addition of adenosine monophosphate (AMP) or uridine monophosphate (UMP) to a protein, resulting in modifications known as AMPylation and UMPylation. The polypeptide is Protein nucleotidyltransferase YdiU (Bacillus thuringiensis (strain Al Hakam)).